We begin with the raw amino-acid sequence, 728 residues long: Peroxisome biogenesis protein 5 (728 aa).

The tract at residues 1–58 is disordered; it reads MAMRDLVNGGAACAVPGSSSSSNPLGALTNALLGSSSKTQERLKEIPNANRSGPRPQF. The interval 11–97 is amphipathic helix 1 (AH1); the sequence is AACAVPGSSS…FRGFRSVDQN (87 aa). Cys13 participates in a covalent cross-link: Glycyl cysteine thioester (Cys-Gly) (interchain with G-Cter in ubiquitin). 3 tandem repeats follow at residues 240–244, 257–261, and 270–274. 3 consecutive short sequence motifs (wxxxF/Y motif) follow at residues 240–244, 257–261, and 270–274; these read WAAEF, WVQSF, and WATEF. Residues 288–311 are amphipathic helix 3 (AH3); it reads SMDMQNIAAMEQTRKLAHTLSQDG. 6 repeat units span residues 348–352, 362–366, 378–382, 396–400, 408–412, and 425–429. 6 short sequence motifs (wxxxF/Y motif) span residues 348 to 352, 362 to 366, 378 to 382, 396 to 400, 408 to 412, and 425 to 429; these read WATEY, WADQF, WADEF, WVNEF, WIDEF, and WANAY. An amphipathic helix 4 (AH4) region spans residues 392-417; that stretch reads AEDQWVNEFSKLNVDDWIDEFAEGPV. TPR repeat units lie at residues 491-524, 590-623, 625-657, and 658-691; these read AEGWRLLGVTHAENDDDQQAIAAMMRAQEADPTN, ADVHIVLGVLYNLSREFDRAITSFQTALQLKPND, SLWNKLGATQANSVQSADAISAYQQALDLKPNY, and VRAWANMGISYANQGMYKESIPYYVRALAMNPKA.

The protein belongs to the peroxisomal targeting signal receptor family. As to quaternary structure, interacts (via WxxxF/Y and LVxEF motifs) with PEX14; promoting translocation through the PEX13-PEX14 docking complex. Interacts with PEX7, promoting peroxisomal import of proteins containing a C-terminal PTS2-type peroxisomal targeting signal. Interacts with LACS7. In terms of processing, monoubiquitinated at Cys-13 by PEX2 during PEX5 passage through the retrotranslocation channel. Cys-13 monoubiquitination acts as a recognition signal for the PEX1-PEX6 complex and is required for PEX5 extraction and export from peroxisomes. When PEX5 recycling is compromised, polyubiquitinated by PEX10 during its passage through the retrotranslocation channel, leading to its degradation. As to expression, expressed in flowers, siliques, leaves and roots.

The protein resides in the cytoplasm. It localises to the cytosol. The protein localises to the peroxisome matrix. Functionally, receptor that mediates peroxisomal import of proteins containing a C-terminal PTS1-type tripeptide peroxisomal targeting signal (SKL-type). Binds to cargo proteins containing a PTS1 peroxisomal targeting signal in the cytosol, and translocates them into the peroxisome matrix by passing through the PEX13-PEX14 docking complex along with cargo proteins. PEX5 receptor is then retrotranslocated into the cytosol, leading to release of bound cargo in the peroxisome matrix, and reset for a subsequent peroxisome import cycle. In addition to promoting peroxisomal translocation of proteins containing a PTS1 peroxisomal targeting signal, mediates peroxisomal import of proteins containing a C-terminal PTS2-type peroxisomal targeting signal via its interaction with PEX7. Interaction with PEX7 only takes place when PEX7 is associated with cargo proteins containing a PTS2 peroxisomal targeting signal. PEX7 along with PTS2-containing cargo proteins are then translocated through the PEX13-PEX14 docking complex together with PEX5. Necessary for the developmental elimination of obsolete peroxisome matrix proteins. This chain is Peroxisome biogenesis protein 5 (PEX5), found in Arabidopsis thaliana (Mouse-ear cress).